Here is a 485-residue protein sequence, read N- to C-terminus: Silicon efflux transporter LSI3 (485 aa).

Transmembrane regions (helical) follow at residues 14–34 (VAFGVFWMLAVFPSVPFLPIG), 37–57 (AGALLGAVLMIVFHVISADDA), 59–79 (ASIDLPILGLLFATMVVGGYL), 106–126 (VCVVTALASALFTNDTCCVVL), and 180–200 (FLLGILPAMLAGMGINMLMLL). Residues 233–242 (ALNNNKKDDG) show a composition bias toward basic and acidic residues. The tract at residues 233 to 261 (ALNNNKKDDGDAATPASPEDDDGGDAESM) is disordered. 5 consecutive transmembrane segments (helical) span residues 283–303 (LFLKSFAYVVTVGMLVAYMLG), 336–356 (LLVFFSGMFVTVSGFNKTGLP), 377–397 (VLSVIILLLSNLASNVPTVLL), 418–438 (WLLLAWVSTVAGNLSLLGSAA), and 461–481 (HVIFGLPSTLVVTAIGIPLIG).

Belongs to the arsenite-antimonite (ArsB) efflux (TC 2.A.45) family.

The protein localises to the cell membrane. Its function is as follows. Silicon efflux transporter involved in silicon transport in shoots. In the nodes, involved with LSI2 and NIP2-2/LSI6 in silicon intervascular transfer, which is required for the preferential distribution of silicon, such as hyperaccumulation of silicon in the husk. Silicon is beneficial to plant growth and helps plants to overcome abiotic and biotic stresses by preventing lodging (falling over) and increasing resistance to pests and diseases, as well as other stresses. The chain is Silicon efflux transporter LSI3 from Oryza sativa subsp. japonica (Rice).